A 298-amino-acid chain; its full sequence is S-adenosylmethionine-dependent nucleotide dehydratase (298 aa).

The region spanning 8 to 235 (ANKELVVNWH…QRFGEIIYAE (228 aa)) is the Radical SAM core domain. Residues cysteine 22, cysteine 26, and cysteine 29 each coordinate [4Fe-4S] cluster.

It belongs to the radical SAM superfamily. Viperin family. The cofactor is [4Fe-4S] cluster.

The enzyme catalyses CTP + AH2 + S-adenosyl-L-methionine = 3'-deoxy-3',4'-didehydro-CTP + 5'-deoxyadenosine + L-methionine + A + H2O + H(+). It catalyses the reaction UTP + AH2 + S-adenosyl-L-methionine = 3'-deoxy-3',4'-didehydro-UTP + 5'-deoxyadenosine + L-methionine + A + H2O + H(+). Expression of pVip8 in E.coli (strain MG1655) confers resistance to phages lambda, P1, SECphi8 and T7. Prevents culture collapse upon infection with T7. Catalyzes the conversion of cytidine triphosphate (CTP) to 3'-deoxy-3',4'-didehydro-CTP (ddhCTP) and uridine triphosphate (UTP) to 3'-deoxy-3',4'-didehydro-UTP (ddhUTP), probably via a SAM-dependent radical mechanism. The modified nucleotides repress transcription from T7 RNA polymerase-directed genes (possibly by acting as chain terminators), strongly suggesting these nucleotides block viral polymerase transcription. The polypeptide is S-adenosylmethionine-dependent nucleotide dehydratase (Psychrobacter lutiphocae (strain DSM 21542 / CCUG 56590 / IMMIB L-1110)).